A 310-amino-acid chain; its full sequence is MAGNSQRRGAIRKSGTKKGTSVGSGGQRRRGLEGRGPTPPAHMRPNHPAAKRAKAQQRRPARGRTDETETVLGRNPVLECLRAGVPSTALYVALGVEADERLTESVSRAADSGIPILEVPRTDLDRMTANHLHQGIALQVPPYNYAHPDDLLAAALDTPPALLVALDNISDPRNLGAIVRSVAAFGGHGVLIPQRRSASVTAVAWRTSAGAAARMPVARATNLTRALKDWADRGVRVVGLDAGGDTAIDDLDGSDPIVVVVGSEGKGLSRLVRQTCDEVVSVPMAGPTESLNASVAAGVVLAEIARQRRT.

The segment at 1 to 70 (MAGNSQRRGA…ARGRTDETET (70 aa)) is disordered. Positions 49–62 (AAKRAKAQQRRPAR) are enriched in basic residues. S-adenosyl-L-methionine-binding residues include glycine 262, valine 282, and leucine 291.

The protein belongs to the class IV-like SAM-binding methyltransferase superfamily. RNA methyltransferase TrmH family.

This is an uncharacterized protein from Mycobacterium marinum (strain ATCC BAA-535 / M).